We begin with the raw amino-acid sequence, 156 residues long: Small ribosomal subunit protein uS7 (156 aa).

The protein belongs to the universal ribosomal protein uS7 family. In terms of assembly, part of the 30S ribosomal subunit. Contacts proteins S9 and S11.

One of the primary rRNA binding proteins, it binds directly to 16S rRNA where it nucleates assembly of the head domain of the 30S subunit. Is located at the subunit interface close to the decoding center, probably blocks exit of the E-site tRNA. In Photobacterium profundum (strain SS9), this protein is Small ribosomal subunit protein uS7.